The sequence spans 501 residues: Proline--tRNA ligase (501 aa).

It belongs to the class-II aminoacyl-tRNA synthetase family.

It carries out the reaction tRNA(Pro) + L-proline + ATP = L-prolyl-tRNA(Pro) + AMP + diphosphate. The sequence is that of Proline--tRNA ligase from Encephalitozoon cuniculi (strain GB-M1) (Microsporidian parasite).